The primary structure comprises 459 residues: MSNFAIILAAGKGTRMKSDLPKVLHKVAGISMLEHVFRSVGAIQPEKTVTVVGHKAELVEEVLTGQTEFVTQSEQLGTGHAVMMTEPILEGLSGHTLVIAGDTPLITGESLKNLIDFHINHKNVATILTAETDNPFGYGRIVRNDNAEVLRIVEQKDATDFEKQIKEINTGTYVFDNERLFEALKNINTNNAQGEYYITDVIGIFRETGEKVGAYTLKDFDESLGVNDRVALATAESVMRRRINHKHMVNGVSFVNPEATYIDIDVEIAPEVQIEANVTLKGQTKIGAETVLTNGTYVVDSTIGAGAVITNSMIEESSVADGVTVGPYAHIRPNSSLGAQVHIGNFVEVKGSSIGENTKAGHLTYIGNCEVGSNVNFGAGTITVNYDGKNKYKTVIGDNVFVGSNSTIIAPVELGDNSLVGAGSTITKDVPADAIAIGRGRQINKDEYATRLPHHPKNQ.

The segment at Met1–Arg229 is pyrophosphorylase. Residues Leu8 to Gly11, Lys22, Gln72, and Gly77 to Thr78 contribute to the UDP-N-acetyl-alpha-D-glucosamine site. Asp102 contacts Mg(2+). Residues Gly139, Glu154, Asn169, and Asn227 each coordinate UDP-N-acetyl-alpha-D-glucosamine. Asn227 provides a ligand contact to Mg(2+). A linker region spans residues Val230–Asn250. The tract at residues Gly251 to Gln459 is N-acetyltransferase. The UDP-N-acetyl-alpha-D-glucosamine site is built by Arg332 and Lys350. His362 acts as the Proton acceptor in catalysis. UDP-N-acetyl-alpha-D-glucosamine contacts are provided by Tyr365 and Asn376. Acetyl-CoA-binding positions include Ala379, Asn385–Tyr386, Ser404, Ala422, and Arg439.

In the N-terminal section; belongs to the N-acetylglucosamine-1-phosphate uridyltransferase family. This sequence in the C-terminal section; belongs to the transferase hexapeptide repeat family. Homotrimer. Mg(2+) is required as a cofactor.

It localises to the cytoplasm. It catalyses the reaction alpha-D-glucosamine 1-phosphate + acetyl-CoA = N-acetyl-alpha-D-glucosamine 1-phosphate + CoA + H(+). The catalysed reaction is N-acetyl-alpha-D-glucosamine 1-phosphate + UTP + H(+) = UDP-N-acetyl-alpha-D-glucosamine + diphosphate. Its pathway is nucleotide-sugar biosynthesis; UDP-N-acetyl-alpha-D-glucosamine biosynthesis; N-acetyl-alpha-D-glucosamine 1-phosphate from alpha-D-glucosamine 6-phosphate (route II): step 2/2. It participates in nucleotide-sugar biosynthesis; UDP-N-acetyl-alpha-D-glucosamine biosynthesis; UDP-N-acetyl-alpha-D-glucosamine from N-acetyl-alpha-D-glucosamine 1-phosphate: step 1/1. It functions in the pathway bacterial outer membrane biogenesis; LPS lipid A biosynthesis. Its function is as follows. Catalyzes the last two sequential reactions in the de novo biosynthetic pathway for UDP-N-acetylglucosamine (UDP-GlcNAc). The C-terminal domain catalyzes the transfer of acetyl group from acetyl coenzyme A to glucosamine-1-phosphate (GlcN-1-P) to produce N-acetylglucosamine-1-phosphate (GlcNAc-1-P), which is converted into UDP-GlcNAc by the transfer of uridine 5-monophosphate (from uridine 5-triphosphate), a reaction catalyzed by the N-terminal domain. This chain is Bifunctional protein GlmU, found in Streptococcus pneumoniae (strain Taiwan19F-14).